Reading from the N-terminus, the 177-residue chain is Phycoerythrin beta subunit (177 aa).

(2R,3E)-phycocyanobilin is bound by residues tyrosine 18, lysine 28, asparagine 35, and aspartate 39. 15,16-dihydrobiliverdin is bound by residues cysteine 50, aspartate 54, and cysteine 61. Residues arginine 77, cysteine 82, arginine 84, and aspartate 85 each contribute to the (2R,3E)-phycocyanobilin site. Residues arginine 129, glutamine 148, and lysine 149 each contribute to the 15,16-dihydrobiliverdin site. The (2R,3E)-phycocyanobilin site is built by proline 154, glycine 156, and cysteine 158.

Belongs to the phycobiliprotein family. In terms of assembly, heterotetramer of 2 identical alpha chains and 2 identical beta chains which form 2 alpha-beta heterodimers within the heterotetramer. The two alpha-beta heterodimers are rotated to an open configuration in contrast to the closed configuration found in other cryptophyte species due to the insertion of a single amino acid, 'Asp-65', in a conserved region of the alpha chain. In the open form, the central chromophores are not in physical contact but are separated by a water-filled channel. Contains three phycocyanobilin chromophores and one 15,16-dihydrobiliverdin chromophore with binding of the phycocyanobilin chromophores mediated by both the alpha and beta subunits.

It localises to the plastid. Its subcellular location is the chloroplast thylakoid membrane. Functionally, light-harvesting photosynthetic bile pigment-protein from the phycobiliprotein complex. This chain is Phycoerythrin beta subunit, found in Hemiselmis virescens.